We begin with the raw amino-acid sequence, 689 residues long: Elongation factor G (689 aa).

Positions 8–282 (LNTRNIGIMA…AVVDYLPSPI (275 aa)) constitute a tr-type G domain. GTP contacts are provided by residues 17-24 (AHIDAGKT), 81-85 (DTPGH), and 135-138 (NKMD).

This sequence belongs to the TRAFAC class translation factor GTPase superfamily. Classic translation factor GTPase family. EF-G/EF-2 subfamily.

It localises to the cytoplasm. Catalyzes the GTP-dependent ribosomal translocation step during translation elongation. During this step, the ribosome changes from the pre-translocational (PRE) to the post-translocational (POST) state as the newly formed A-site-bound peptidyl-tRNA and P-site-bound deacylated tRNA move to the P and E sites, respectively. Catalyzes the coordinated movement of the two tRNA molecules, the mRNA and conformational changes in the ribosome. The sequence is that of Elongation factor G from Mycoplasma capricolum subsp. capricolum (strain California kid / ATCC 27343 / NCTC 10154).